The primary structure comprises 145 residues: 3-dehydroquinate dehydratase (145 aa).

The Proton acceptor role is filled by Tyr22. Substrate contacts are provided by Asn71, His77, and Asp84. His97 functions as the Proton donor in the catalytic mechanism. Residues 98 to 99 (IS) and Arg108 contribute to the substrate site.

Belongs to the type-II 3-dehydroquinase family. Homododecamer.

It carries out the reaction 3-dehydroquinate = 3-dehydroshikimate + H2O. It participates in metabolic intermediate biosynthesis; chorismate biosynthesis; chorismate from D-erythrose 4-phosphate and phosphoenolpyruvate: step 3/7. In terms of biological role, catalyzes a trans-dehydration via an enolate intermediate. This Thermotoga neapolitana (strain ATCC 49049 / DSM 4359 / NBRC 107923 / NS-E) protein is 3-dehydroquinate dehydratase.